We begin with the raw amino-acid sequence, 216 residues long: Flavin-dependent thymidylate synthase (216 aa).

Residues 9-206 (GFVELVDVMG…PWTYEAFIKY (198 aa)) form the ThyX domain. FAD-binding positions include Ser55, 78–80 (RHR), and Glu86. DUMP is bound by residues 75 to 78 (QWFR), 86 to 90 (ELSGR), and Arg145. Residues 78–88 (RHRIASYNELS) carry the ThyX motif motif. Residues 161-163 (NAR) and Asn167 each bind FAD. Position 172 (Arg172) interacts with dUMP. Arg172 serves as the catalytic Involved in ionization of N3 of dUMP, leading to its activation.

This sequence belongs to the thymidylate synthase ThyX family. In terms of assembly, homotetramer. It depends on FAD as a cofactor.

It catalyses the reaction dUMP + (6R)-5,10-methylene-5,6,7,8-tetrahydrofolate + NADPH + H(+) = dTMP + (6S)-5,6,7,8-tetrahydrofolate + NADP(+). The protein operates within pyrimidine metabolism; dTTP biosynthesis. Its function is as follows. Catalyzes the reductive methylation of 2'-deoxyuridine-5'-monophosphate (dUMP) to 2'-deoxythymidine-5'-monophosphate (dTMP) while utilizing 5,10-methylenetetrahydrofolate (mTHF) as the methyl donor, and NADPH and FADH(2) as the reductant. The protein is Flavin-dependent thymidylate synthase of Thermotoga neapolitana (strain ATCC 49049 / DSM 4359 / NBRC 107923 / NS-E).